Consider the following 281-residue polypeptide: NADPH-dependent 7-cyano-7-deazaguanine reductase (281 aa).

87–89 (IES) contributes to the substrate binding site. 89–90 (SK) provides a ligand contact to NADPH. Cysteine 188 (thioimide intermediate) is an active-site residue. The active-site Proton donor is the aspartate 195. 227–228 (HE) is a binding site for substrate. Position 256-257 (256-257 (RG)) interacts with NADPH. A disordered region spans residues 261 to 281 (INPYRSTEQAKPDHNHRMARQ). Over residues 268–281 (EQAKPDHNHRMARQ) the composition is skewed to basic and acidic residues.

It belongs to the GTP cyclohydrolase I family. QueF type 2 subfamily. In terms of assembly, homodimer.

The protein resides in the cytoplasm. The enzyme catalyses 7-aminomethyl-7-carbaguanine + 2 NADP(+) = 7-cyano-7-deazaguanine + 2 NADPH + 3 H(+). It participates in tRNA modification; tRNA-queuosine biosynthesis. Catalyzes the NADPH-dependent reduction of 7-cyano-7-deazaguanine (preQ0) to 7-aminomethyl-7-deazaguanine (preQ1). The chain is NADPH-dependent 7-cyano-7-deazaguanine reductase from Vibrio vulnificus (strain YJ016).